The following is a 124-amino-acid chain: Small ribosomal subunit protein uS12 (124 aa).

Position 89 is a 3-methylthioaspartic acid (D89).

Belongs to the universal ribosomal protein uS12 family. Part of the 30S ribosomal subunit. Contacts proteins S8 and S17. May interact with IF1 in the 30S initiation complex.

With S4 and S5 plays an important role in translational accuracy. In terms of biological role, interacts with and stabilizes bases of the 16S rRNA that are involved in tRNA selection in the A site and with the mRNA backbone. Located at the interface of the 30S and 50S subunits, it traverses the body of the 30S subunit contacting proteins on the other side and probably holding the rRNA structure together. The combined cluster of proteins S8, S12 and S17 appears to hold together the shoulder and platform of the 30S subunit. The protein is Small ribosomal subunit protein uS12 of Vibrio campbellii (strain ATCC BAA-1116).